Here is a 78-residue protein sequence, read N- to C-terminus: MIIPWQQLDPETLDNIIESFVLREGTDYGEQEWSLAQKVEDIRRQLKSGEVVLVWSELHETLNIMPRDQFNAGGHAPY.

The protein belongs to the UPF0270 family.

In Pectobacterium carotovorum subsp. carotovorum (strain PC1), this protein is UPF0270 protein PC1_3850.